The primary structure comprises 180 residues: Cytokinin-beta-glucosidase 3 (180 aa).

Hydrolyzes cytokinin glucosides thus liberating free cytokinins. This Panax ginseng (Korean ginseng) protein is Cytokinin-beta-glucosidase 3 (ROLC3).